Consider the following 365-residue polypeptide: Crh-like protein ARB_03382 (365 aa).

Residues 1–25 (MMASRRISVLSSLGLFACLLSPVVA) form the signal peptide. The Extracellular portion of the chain corresponds to 26–302 (QTFTYCNPLE…RWRELPTAAK (277 aa)). Cys31 and Cys39 are disulfide-bonded. 4 N-linked (GlcNAc...) asparagine glycosylation sites follow: Asn48, Asn54, Asn63, and Asn77. Positions 50 to 243 (TTYLNSSLNP…YEKTPYIMSV (194 aa)) constitute a GH16 domain. Glu125 serves as the catalytic Nucleophile. Catalysis depends on Glu129, which acts as the Proton donor. Position 129 (Glu129) interacts with chitin. N-linked (GlcNAc...) asparagine glycans are attached at residues Asn147 and Asn168. Arg209 and Trp213 together coordinate chitin. A helical transmembrane segment spans residues 303–323 (IAIFASIGGLVILGMAIIAFC). The Cytoplasmic segment spans residues 324-365 (CVKQRRAGRREFSMENSKFVEDQNNVMAMRTQWNHKYKPVGS).

The protein belongs to the glycosyl hydrolase 16 family. CRH1 subfamily.

The protein resides in the membrane. The catalysed reaction is Random endo-hydrolysis of N-acetyl-beta-D-glucosaminide (1-&gt;4)-beta-linkages in chitin and chitodextrins.. Its function is as follows. Dual chitinase/transglycosylase that plays a role in cell wall architecture. Chitinase and transglycosylase activities are coupled. Required for the polysaccharide cross-linking at the septa and the cell wall. More specifically, transfers chitin to 1,6-beta-glucan in the cell wall. Plays an important role in fungal pathogenesis. Involved in cell wall assembly and regeneration, filamentation, and adherence to host cells. The protein is Crh-like protein ARB_03382 of Arthroderma benhamiae (strain ATCC MYA-4681 / CBS 112371) (Trichophyton mentagrophytes).